Here is a 76-residue protein sequence, read N- to C-terminus: Sec-independent protein translocase protein TatA (76 aa).

Residues 1-21 (MGSFSIWHWLIVLAVVLLLFG) traverse the membrane as a helical segment. The tract at residues 43-76 (MSDEDAKDDARDSGRTIDAKADETVNDVKKTTKS) is disordered. The segment covering 50-76 (DDARDSGRTIDAKADETVNDVKKTTKS) has biased composition (basic and acidic residues).

It belongs to the TatA/E family. As to quaternary structure, the Tat system comprises two distinct complexes: a TatABC complex, containing multiple copies of TatA, TatB and TatC subunits, and a separate TatA complex, containing only TatA subunits. Substrates initially bind to the TatABC complex, which probably triggers association of the separate TatA complex to form the active translocon.

The protein resides in the cell inner membrane. Part of the twin-arginine translocation (Tat) system that transports large folded proteins containing a characteristic twin-arginine motif in their signal peptide across membranes. TatA could form the protein-conducting channel of the Tat system. The sequence is that of Sec-independent protein translocase protein TatA from Brucella anthropi (strain ATCC 49188 / DSM 6882 / CCUG 24695 / JCM 21032 / LMG 3331 / NBRC 15819 / NCTC 12168 / Alc 37) (Ochrobactrum anthropi).